Consider the following 501-residue polypeptide: Type B diterpene cyclase (501 aa).

Belongs to the terpene synthase family. In terms of assembly, monomer. Requires Mg(2+) as cofactor.

The catalysed reaction is geranylgeranyl diphosphate = tuberculosinyl diphosphate. Strongly inhibited by 15-aza-dihydrogeranylgeraniol and 5-isopropyl-N,N,N,2-tetramethyl-4-(piperidine-1-carbonyloxy)benzenaminium chloride (Amo-1618). Inhibited by GGPP concentrations higher than 50 uM. In terms of biological role, catalyzes the formation of tuberculosinyl diphosphate from geranylgeranyl diphosphate (GGPP). It could also react with (14R/S)-14,15-oxidoGGPP to generate 3alpha- and 3beta-hydroxytuberculosinyl diphosphate. The polypeptide is Type B diterpene cyclase (Mycobacterium tuberculosis (strain ATCC 25618 / H37Rv)).